Reading from the N-terminus, the 361-residue chain is MNHIKLIDCPIDVTYAINLISDPSCGASSIFIGTTRDSFQGKKVVSLAYEAYENMALKEMDKICSDLRATWPDLKHILIYHRLGTVPENEASVVIAASAPHRSAALKAVTFAIDQLKSRVPIWKKEIYEGNHDAEWKENSESIRPKKSLSSFNYSVCKVDESRVVSRNLVQIRANDCELKNRVECFFKRKRAEINSCNVIDFKQSNLSSNINSDTEVDVSCARTQSTISKQEQSNCHLKVRRATNRCGPQQMQFRPEYKHELSRLTASRVSTNEVGESLQNSRLHSIETYMGLTSKNNENIINRIKNVENRILLLESTSPEYQHFFEQSCMDQPEKKIKTNKTYSAHELRVYIHRKNKECP.

Substrate contacts are provided by residues 101–102, Lys-117, and 124–126; these read HR and KKE.

This sequence belongs to the MoaE family. MOCS2B subfamily. As to quaternary structure, heterotetramer; composed of 2 small (Mocs2A) and 2 large (Mocs2B) subunits.

The protein resides in the cytoplasm. It catalyses the reaction 2 [molybdopterin-synthase sulfur-carrier protein]-C-terminal-Gly-aminoethanethioate + cyclic pyranopterin phosphate + H2O = molybdopterin + 2 [molybdopterin-synthase sulfur-carrier protein]-C-terminal Gly-Gly + 2 H(+). It functions in the pathway cofactor biosynthesis; molybdopterin biosynthesis. Catalytic subunit of the molybdopterin synthase complex, a complex that catalyzes the conversion of precursor Z into molybdopterin. Acts by mediating the incorporation of 2 sulfur atoms from thiocarboxylated Mocs2A into precursor Z to generate a dithiolene group. The protein is Molybdopterin synthase catalytic subunit of Drosophila pseudoobscura pseudoobscura (Fruit fly).